Consider the following 128-residue polypeptide: Glycine cleavage system H protein (128 aa).

Positions 22-104 (TVLVGITDYA…YGEGWIFRLK (83 aa)) constitute a Lipoyl-binding domain. At Lys63 the chain carries N6-lipoyllysine.

It belongs to the GcvH family. The glycine cleavage system is composed of four proteins: P, T, L and H. (R)-lipoate serves as cofactor.

In terms of biological role, the glycine cleavage system catalyzes the degradation of glycine. The H protein shuttles the methylamine group of glycine from the P protein to the T protein. The polypeptide is Glycine cleavage system H protein (Thermus thermophilus (strain ATCC BAA-163 / DSM 7039 / HB27)).